We begin with the raw amino-acid sequence, 391 residues long: MMITKQSYKKLALMRVFVFSLSAFIFNTTEFVPIALLSDIAKSFEMESASVGLMITLYAWIVSLGSLPLMLLSAKIERKRLLLFLFGLFIVSHILSVVAWDFWVLLISRMGIALAHSVFWSITASLVIRVAPIGRKQQALGLLALGSSLAMILGLPLGRIIGQMLDWRSTFGMIGGVALLVALLMYRLLPSLPSRNAGTLSSLPVLMKRPLLVGIYLLVILAISGHFTTYSYIEPFIIQISQFSPEVATLMLFVFGLAGVMGSFLFGRFYEKNPKKFIACAIILVLCPQLLLFSFKHLEWVIFLQIFLWGIGITSLGISLQMRVLQLAPNATDVASAIFSGSYNVGIGSGALFGSIVIHQLGLGYIGFVGGALGLLALFWFNFITIKFGAK.

The next 12 membrane-spanning stretches (helical) occupy residues 16–36 (VFVF…PIAL), 51–71 (VGLM…PLML), 82–102 (LLFL…AWDF), 103–123 (WVLL…WSIT), 138–158 (QALG…LPLG), 170–190 (TFGM…RLLP), 210–230 (PLLV…FTTY), 247–267 (VATL…FLFG), 277–297 (FIAC…SFKH), 300–320 (WVIF…GISL), 338–358 (IFSG…SIVI), and 361–381 (LGLG…LFWF).

This sequence belongs to the major facilitator superfamily. SotB (TC 2.A.1.2) family.

It is found in the cell inner membrane. In terms of biological role, involved in the efflux of sugars. The physiological role may be the reduction of the intracellular concentration of toxic sugars or sugar metabolites. The polypeptide is Probable sugar efflux transporter (Helicobacter acinonychis (strain Sheeba)).